A 235-amino-acid chain; its full sequence is Transcriptional regulatory protein WalR (235 aa).

The Response regulatory domain maps to 4 to 117; it reads KILVVDDEKP…ELLARVKANL (114 aa). D53 carries the 4-aspartylphosphate modification. Residues 132–231 constitute a DNA-binding region (ompR/PhoB-type); that stretch reads SNEIHIGSLV…RRGVGYYLRN (100 aa).

As to quaternary structure, homodimer. Phosphorylated by WalK.

The protein localises to the cytoplasm. In terms of biological role, member of the two-component regulatory system WalK/WalR involved in the regulation of the ftsAZ operon, the yocH, ykvT, cwlO, lytE, ydjM, yjeA, yoeB genes and the tagAB and tagDEF operons. Binds to the ftsAZ P1 promoter sequence in vitro. WalR has been shown to directly bind to the regulatory regions of yocH, ykvT, tagAB/tagDEF. Activates cwlO, lytE and ydjM and represses yoeB and yjeA. This Bacillus subtilis (strain 168) protein is Transcriptional regulatory protein WalR.